We begin with the raw amino-acid sequence, 763 residues long: Disintegrin and metalloproteinase domain-containing protein 29 (763 aa).

The signal sequence occupies residues M1–A31. The propeptide occupies G32–W200. N164, N177, and N223 each carry an N-linked (GlcNAc...) asparagine glycan. Residues W201 to Y684 are Extracellular-facing. In terms of domain architecture, Peptidase M12B spans K205–Y396. 3 disulfide bridges follow: C313–C390, C353–C375, and C355–C360. Residues N374, N424, N434, N475, and N584 are each glycosylated (N-linked (GlcNAc...) asparagine). Residues R403–D489 enclose the Disintegrin domain. C461 and C481 form a disulfide bridge. Intrachain disulfides connect C631–C642, C636–C648, and C650–C659. An EGF-like domain is found at C631 to M660. Residues L685–F705 traverse the membrane as a helical segment. Over N706–N763 the chain is Cytoplasmic. The disordered stretch occupies residues R712–N763. Residues R751 to N763 are compositionally biased toward polar residues.

It localises to the membrane. Its function is as follows. May be involved in spermatogenesis and fertilization. Seems to be a non catalytic metalloprotease-like protein. In Mus musculus (Mouse), this protein is Disintegrin and metalloproteinase domain-containing protein 29 (Adam29).